A 174-amino-acid polypeptide reads, in one-letter code: C-type lectin domain family 2 member A (174 aa).

The Cytoplasmic portion of the chain corresponds to 1–27 (MINPELRDGRADGFIHRIVPKLIQNWK). A helical; Signal-anchor for type II membrane protein transmembrane segment spans residues 28 to 48 (IGLMCFLSIIITTVCIIMIAT). The Extracellular portion of the chain corresponds to 49–174 (WSKHAKPVAC…WICSKPKYFL (126 aa)). Cys-58 and Cys-69 are oxidised to a cystine. The region spanning 65–174 (VRDKCFYFSD…WICSKPKYFL (110 aa)) is the C-type lectin domain. Asn-78, Asn-130, and Asn-143 each carry an N-linked (GlcNAc...) asparagine glycan. An intrachain disulfide couples Cys-86 to Cys-167.

Homodimer; non-disulfide-linked. Interacts with KLRB1. Interacts with KLRF2. In terms of processing, N-glycosylated. Mainly expressed in skin. Also expressed in keratinocytes, spleen, thymus, small intestine, peripheral blood monocytes, bone marrow, ovary, testis and skin. High expression in CD8(+), B-lymphocytes and naive CD4(+) T-cells. Restricted mostly to proliferating lymphocytes. Not detected in myeloid leukocytes or natural killer (NK) cells.

It is found in the cell membrane. In terms of biological role, membrane-bound protein expressed mainly on keratinocytes which acts as a ligand to stimulate the activating receptor NKp65/KLRF2, expressed on the surface of natural killer (NK) cells. Facilitates thereby dedicated immune recognition of keratinocytes leading to natural killer cell mediated cytotoxicity. Also plays a role in modulating the extent of T-cell expansion. The polypeptide is C-type lectin domain family 2 member A (CLEC2A) (Homo sapiens (Human)).